Consider the following 158-residue polypeptide: Large ribosomal subunit protein bL17 (158 aa).

Positions 119–158 (APAAAPEAEEKGEKKAAKAPKAEKAPKAEKKPAKKAAKAE) are disordered. A compositionally biased stretch (basic and acidic residues) spans 126–158 (AEEKGEKKAAKAPKAEKAPKAEKKPAKKAAKAE).

It belongs to the bacterial ribosomal protein bL17 family. Part of the 50S ribosomal subunit. Contacts protein L32.

This chain is Large ribosomal subunit protein bL17, found in Anaeromyxobacter sp. (strain K).